A 395-amino-acid polypeptide reads, in one-letter code: Elongation factor Tu (395 aa).

Residues 10–205 enclose the tr-type G domain; it reads KVHMNVGTIG…AMDSYFEDPV (196 aa). The segment at 19–26 is G1; that stretch reads GHVDHGKT. A GTP-binding site is contributed by 19-26; that stretch reads GHVDHGKT. Threonine 26 serves as a coordination point for Mg(2+). A G2 region spans residues 60–64; the sequence is GITIN. Residues 81–84 form a G3 region; the sequence is DCPG. Residues 81–85 and 136–139 each bind GTP; these read DCPGH and NKVD. Residues 136 to 139 are G4; sequence NKVD. A G5 region spans residues 173-175; the sequence is SAF.

It belongs to the TRAFAC class translation factor GTPase superfamily. Classic translation factor GTPase family. EF-Tu/EF-1A subfamily. As to quaternary structure, monomer.

The protein localises to the cytoplasm. The enzyme catalyses GTP + H2O = GDP + phosphate + H(+). In terms of biological role, GTP hydrolase that promotes the GTP-dependent binding of aminoacyl-tRNA to the A-site of ribosomes during protein biosynthesis. This chain is Elongation factor Tu, found in Treponema pallidum (strain Nichols).